A 618-amino-acid chain; its full sequence is Protease 4 (618 aa).

The Cytoplasmic segment spans residues 1–24 (MRTLWRFIAGFFKWTWRLLNFVRE). A helical membrane pass occupies residues 25–45 (MVLNLFFIFLVLVGVGIWMQV). Residues 46-618 (SGGDSKETAS…AFCLTCANMR (573 aa)) are Periplasmic-facing. K209 (proton donor/acceptor) is an active-site residue. S409 (nucleophile) is an active-site residue.

The protein belongs to the peptidase S49 family. In terms of assembly, homotetramer.

The protein localises to the cell inner membrane. Inhibited by serine hydrolase inhibitor FP-biotin and by antipain. Digests cleaved signal peptides in vitro, its in vivo function is unknown. This activity is necessary to maintain proper secretion of mature proteins across the membrane. This is Protease 4 (sppA) from Escherichia coli (strain K12).